A 79-amino-acid chain; its full sequence is uncharacterized protein (79 aa).

The protein resides in the mitochondrion. This is an uncharacterized protein from Marchantia polymorpha (Common liverwort).